The sequence spans 145 residues: D-aminoacyl-tRNA deacylase (145 aa).

The Gly-cisPro motif, important for rejection of L-amino acids signature appears at 137–138 (GP).

The protein belongs to the DTD family. As to quaternary structure, homodimer.

It is found in the cytoplasm. It carries out the reaction glycyl-tRNA(Ala) + H2O = tRNA(Ala) + glycine + H(+). It catalyses the reaction a D-aminoacyl-tRNA + H2O = a tRNA + a D-alpha-amino acid + H(+). Functionally, an aminoacyl-tRNA editing enzyme that deacylates mischarged D-aminoacyl-tRNAs. Also deacylates mischarged glycyl-tRNA(Ala), protecting cells against glycine mischarging by AlaRS. Acts via tRNA-based rather than protein-based catalysis; rejects L-amino acids rather than detecting D-amino acids in the active site. By recycling D-aminoacyl-tRNA to D-amino acids and free tRNA molecules, this enzyme counteracts the toxicity associated with the formation of D-aminoacyl-tRNA entities in vivo and helps enforce protein L-homochirality. The sequence is that of D-aminoacyl-tRNA deacylase from Salmonella enteritidis PT4 (strain P125109).